The primary structure comprises 249 residues: BPI fold-containing family A member 1 (249 aa).

An N-terminal signal peptide occupies residues 1-15; sequence MFQVAGLIVFCGLLA. The interval 81 to 86 is important for surfactant activity and antibacterial properties; that stretch reads LLGGLL. Asn151 carries N-linked (GlcNAc...) asparagine glycosylation. Cys173 and Cys217 are joined by a disulfide.

This sequence belongs to the BPI/LBP/Plunc superfamily. Plunc family. As to quaternary structure, monomer. Interacts (via N-terminus) with SCNN1B, a subunit of the heterotrimeric epithelial sodium channel (ENaC); this inhibits proteolytic activation of ENaC. As to expression, expressed in lung and trachea.

The protein resides in the secreted. Functionally, lipid-binding protein which shows high specificity for the surfactant phospholipid dipalmitoylphosphatidylcholine (DPPC). Plays a role in the innate immune responses of the upper airways. Reduces the surface tension in secretions from airway epithelia and inhibits the formation of biofilm by pathogenic Gram-negative bacteria, such as P.aeruginosa and K.pneumoniae. Negatively regulates proteolytic cleavage of SCNN1G, an event that is required for activation of the epithelial sodium channel (ENaC), and thereby contributes to airway surface liquid homeostasis and proper clearance of mucus. Plays a role in the airway inflammatory response after exposure to irritants. May attract macrophages and neutrophils. In Sus scrofa (Pig), this protein is BPI fold-containing family A member 1 (BPIFA1).